The following is a 138-amino-acid chain: Phosphoribosyl-AMP cyclohydrolase (138 aa).

A Mg(2+)-binding site is contributed by Asp84. Cys85 provides a ligand contact to Zn(2+). 2 residues coordinate Mg(2+): Asp86 and Asp88. 2 residues coordinate Zn(2+): Cys102 and Cys109.

The protein belongs to the PRA-CH family. As to quaternary structure, homodimer. Mg(2+) is required as a cofactor. The cofactor is Zn(2+).

It localises to the cytoplasm. It carries out the reaction 1-(5-phospho-beta-D-ribosyl)-5'-AMP + H2O = 1-(5-phospho-beta-D-ribosyl)-5-[(5-phospho-beta-D-ribosylamino)methylideneamino]imidazole-4-carboxamide. Its pathway is amino-acid biosynthesis; L-histidine biosynthesis; L-histidine from 5-phospho-alpha-D-ribose 1-diphosphate: step 3/9. Functionally, catalyzes the hydrolysis of the adenine ring of phosphoribosyl-AMP. The sequence is that of Phosphoribosyl-AMP cyclohydrolase from Burkholderia ambifaria (strain ATCC BAA-244 / DSM 16087 / CCUG 44356 / LMG 19182 / AMMD) (Burkholderia cepacia (strain AMMD)).